Consider the following 842-residue polypeptide: DNA gyrase subunit A (842 aa).

The Topo IIA-type catalytic domain occupies Leu-42 to Leu-511. Tyr-130 (O-(5'-phospho-DNA)-tyrosine intermediate) is an active-site residue. The GyrA-box signature appears at Gln-538–Gly-544. The tract at residues Glu-822–Ala-842 is disordered.

The protein belongs to the type II topoisomerase GyrA/ParC subunit family. Heterotetramer, composed of two GyrA and two GyrB chains. In the heterotetramer, GyrA contains the active site tyrosine that forms a transient covalent intermediate with DNA, while GyrB binds cofactors and catalyzes ATP hydrolysis.

The protein resides in the cytoplasm. It catalyses the reaction ATP-dependent breakage, passage and rejoining of double-stranded DNA.. With respect to regulation, inhibited by 4-quinoline drugs (nalidixic acid, ciprofloxacin, ofloxacin), although it is much less sensitive than the corresponding enzyme from E.coli. A type II topoisomerase that negatively supercoils closed circular double-stranded (ds) DNA in an ATP-dependent manner to modulate DNA topology and maintain chromosomes in an underwound state. Negative supercoiling favors strand separation, and DNA replication, transcription, recombination and repair, all of which involve strand separation. Also able to catalyze the interconversion of other topological isomers of dsDNA rings, including catenanes and knotted rings. Type II topoisomerases break and join 2 DNA strands simultaneously in an ATP-dependent manner. This chain is DNA gyrase subunit A, found in Mycolicibacterium smegmatis (strain ATCC 700084 / mc(2)155) (Mycobacterium smegmatis).